The chain runs to 256 residues: Trypsin alpha (256 aa).

The signal sequence occupies residues 1-22 (MLKIVILLSAVVCALGGTVPEG). Positions 23 to 30 (LLPQLDGR) are cleaved as a propeptide — activation peptide. One can recognise a Peptidase S1 domain in the interval 31–254 (IVGGSATTIS…LRSWVISTAN (224 aa)). A disulfide bridge connects residues cysteine 56 and cysteine 72. Residues histidine 71 and aspartate 116 each act as charge relay system in the active site. Cystine bridges form between cysteine 180-cysteine 197 and cysteine 206-cysteine 230. Serine 210 functions as the Charge relay system in the catalytic mechanism.

Belongs to the peptidase S1 family.

Its subcellular location is the secreted. The protein resides in the extracellular space. It catalyses the reaction Preferential cleavage: Arg-|-Xaa, Lys-|-Xaa.. This Drosophila erecta (Fruit fly) protein is Trypsin alpha (alphaTry).